Here is a 304-residue protein sequence, read N- to C-terminus: Dihydroorotate dehydrogenase B (NAD(+)), catalytic subunit (304 aa).

FMN-binding positions include S21 and 45-46; that span reads KA. Residues K45 and 69–73 contribute to the substrate site; that span reads NAIGL. FMN-binding residues include N99 and N127. N127 serves as a coordination point for substrate. Residue C130 is the Nucleophile of the active site. Positions 165 and 191 each coordinate FMN. 192–193 lines the substrate pocket; the sequence is NT. Residues G217, 243-244, and 265-266 each bind FMN; these read GG and GT.

Belongs to the dihydroorotate dehydrogenase family. Type 1 subfamily. As to quaternary structure, heterotetramer of 2 PyrK and 2 PyrD type B subunits. FMN serves as cofactor.

It is found in the cytoplasm. The enzyme catalyses (S)-dihydroorotate + NAD(+) = orotate + NADH + H(+). The protein operates within pyrimidine metabolism; UMP biosynthesis via de novo pathway; orotate from (S)-dihydroorotate (NAD(+) route): step 1/1. In terms of biological role, catalyzes the conversion of dihydroorotate to orotate with NAD(+) as electron acceptor. The polypeptide is Dihydroorotate dehydrogenase B (NAD(+)), catalytic subunit (pyrD) (Listeria welshimeri serovar 6b (strain ATCC 35897 / DSM 20650 / CCUG 15529 / CIP 8149 / NCTC 11857 / SLCC 5334 / V8)).